The chain runs to 74 residues: Large ribosomal subunit protein eL38B (74 aa).

Belongs to the eukaryotic ribosomal protein eL38 family. As to quaternary structure, component of the large ribosomal subunit (LSU). Mature yeast ribosomes consist of a small (40S) and a large (60S) subunit. The 40S small subunit contains 1 molecule of ribosomal RNA (18S rRNA) and at least 33 different proteins. The large 60S subunit contains 3 rRNA molecules (25S, 5.8S and 5S rRNA) and at least 46 different proteins.

The protein localises to the cytoplasm. Its function is as follows. Component of the ribosome, a large ribonucleoprotein complex responsible for the synthesis of proteins in the cell. The small ribosomal subunit (SSU) binds messenger RNAs (mRNAs) and translates the encoded message by selecting cognate aminoacyl-transfer RNA (tRNA) molecules. The large subunit (LSU) contains the ribosomal catalytic site termed the peptidyl transferase center (PTC), which catalyzes the formation of peptide bonds, thereby polymerizing the amino acids delivered by tRNAs into a polypeptide chain. The nascent polypeptides leave the ribosome through a tunnel in the LSU and interact with protein factors that function in enzymatic processing, targeting, and the membrane insertion of nascent chains at the exit of the ribosomal tunnel. This chain is Large ribosomal subunit protein eL38B (rpl3802), found in Schizosaccharomyces pombe (strain 972 / ATCC 24843) (Fission yeast).